Here is a 197-residue protein sequence, read N- to C-terminus: Peptidyl-tRNA hydrolase (197 aa).

Tyr-18 contributes to the tRNA binding site. The Proton acceptor role is filled by His-23. TRNA contacts are provided by Phe-69, Asn-71, and Asn-117.

It belongs to the PTH family. In terms of assembly, monomer.

It localises to the cytoplasm. It carries out the reaction an N-acyl-L-alpha-aminoacyl-tRNA + H2O = an N-acyl-L-amino acid + a tRNA + H(+). In terms of biological role, hydrolyzes ribosome-free peptidyl-tRNAs (with 1 or more amino acids incorporated), which drop off the ribosome during protein synthesis, or as a result of ribosome stalling. Catalyzes the release of premature peptidyl moieties from peptidyl-tRNA molecules trapped in stalled 50S ribosomal subunits, and thus maintains levels of free tRNAs and 50S ribosomes. The chain is Peptidyl-tRNA hydrolase from Tolumonas auensis (strain DSM 9187 / NBRC 110442 / TA 4).